The primary structure comprises 1070 residues: DNA-directed RNA polymerase subunit beta (1070 aa).

The protein belongs to the RNA polymerase beta chain family. In terms of assembly, in plastids the minimal PEP RNA polymerase catalytic core is composed of four subunits: alpha, beta, beta', and beta''. When a (nuclear-encoded) sigma factor is associated with the core the holoenzyme is formed, which can initiate transcription.

Its subcellular location is the plastid. The protein localises to the chloroplast. The enzyme catalyses RNA(n) + a ribonucleoside 5'-triphosphate = RNA(n+1) + diphosphate. DNA-dependent RNA polymerase catalyzes the transcription of DNA into RNA using the four ribonucleoside triphosphates as substrates. The protein is DNA-directed RNA polymerase subunit beta of Populus alba (White poplar).